Here is a 125-residue protein sequence, read N- to C-terminus: Ribosome-binding factor A (125 aa).

This sequence belongs to the RbfA family. As to quaternary structure, monomer. Binds 30S ribosomal subunits, but not 50S ribosomal subunits or 70S ribosomes.

It is found in the cytoplasm. Its function is as follows. One of several proteins that assist in the late maturation steps of the functional core of the 30S ribosomal subunit. Associates with free 30S ribosomal subunits (but not with 30S subunits that are part of 70S ribosomes or polysomes). Required for efficient processing of 16S rRNA. May interact with the 5'-terminal helix region of 16S rRNA. The chain is Ribosome-binding factor A from Wigglesworthia glossinidia brevipalpis.